Here is a 133-residue protein sequence, read N- to C-terminus: MHECMIVFFIFAVVSIYYADAESCLYLGQHCNALATKKCCPPFTCKFVNQREGICVREDPGAESCLYLGQHCNALATKKCCPPFTCKFVNQREGICVREDPGVGGGCLPDKQQCRRNKDCCSKSCYRGNCRSK.

Positions 1–21 (MHECMIVFFIFAVVSIYYADA) are cleaved as a signal peptide. Disulfide bonds link cysteine 107–cysteine 121, cysteine 114–cysteine 125, and cysteine 120–cysteine 130.

The protein resides in the secreted. The chain is Egg protein CP422 (CP422) from Schistosoma japonicum (Blood fluke).